The primary structure comprises 320 residues: Malate dehydrogenase (320 aa).

NAD(+)-binding positions include 10 to 15 (GAGQIG) and Asp34. Substrate is bound by residues Arg83 and Arg89. Residues Asn96 and 119 to 121 (ITN) each bind NAD(+). Residues Asn121 and Arg152 each contribute to the substrate site. His176 functions as the Proton acceptor in the catalytic mechanism.

The protein belongs to the LDH/MDH superfamily. MDH type 3 family.

The catalysed reaction is (S)-malate + NAD(+) = oxaloacetate + NADH + H(+). Its function is as follows. Catalyzes the reversible oxidation of malate to oxaloacetate. The polypeptide is Malate dehydrogenase (Dinoroseobacter shibae (strain DSM 16493 / NCIMB 14021 / DFL 12)).